We begin with the raw amino-acid sequence, 177 residues long: Large ribosomal subunit protein uL10 (177 aa).

The protein belongs to the universal ribosomal protein uL10 family. As to quaternary structure, part of the ribosomal stalk of the 50S ribosomal subunit. The N-terminus interacts with L11 and the large rRNA to form the base of the stalk. The C-terminus forms an elongated spine to which L12 dimers bind in a sequential fashion forming a multimeric L10(L12)X complex.

Forms part of the ribosomal stalk, playing a central role in the interaction of the ribosome with GTP-bound translation factors. The chain is Large ribosomal subunit protein uL10 from Xanthomonas axonopodis pv. citri (strain 306).